A 30-amino-acid chain; its full sequence is uncharacterized protein (30 aa).

The N-terminal stretch at 1–22 is a signal peptide; it reads MRFLFFLPPSFITSFLYLALYS.

This is an uncharacterized protein from Schizosaccharomyces pombe (strain 972 / ATCC 24843) (Fission yeast).